A 461-amino-acid polypeptide reads, in one-letter code: Fumarate hydratase class II (461 aa).

Substrate contacts are provided by residues 97–99 (SGT), R125, 128–131 (HPND), 138–140 (SSN), and T186. H187 (proton donor/acceptor) is an active-site residue. Residue S317 is part of the active site. Substrate contacts are provided by residues S318 and 323-325 (KVN).

This sequence belongs to the class-II fumarase/aspartase family. Fumarase subfamily. Homotetramer.

It is found in the cytoplasm. It catalyses the reaction (S)-malate = fumarate + H2O. It functions in the pathway carbohydrate metabolism; tricarboxylic acid cycle; (S)-malate from fumarate: step 1/1. In terms of biological role, involved in the TCA cycle. Catalyzes the stereospecific interconversion of fumarate to L-malate. This chain is Fumarate hydratase class II, found in Ralstonia nicotianae (strain ATCC BAA-1114 / GMI1000) (Ralstonia solanacearum).